Consider the following 160-residue polypeptide: MNPRRKKRLGIILAIFFGISATVGLMVYALNQNMDLFYTPTELVNGKDGKKPEVGQRLRIGGMVVVGSVSRDNESLRVSFDLADVGPKVTILYDGILPDLFREGQGIVAQGVLKDATTIEAFEVLAKHDEEYMPSEVAEAMKKTHEPLQYTTEQKEGNAQ.

Residues 1–8 lie on the Cytoplasmic side of the membrane; the sequence is MNPRRKKR. Residues 9–29 traverse the membrane as a helical; Signal-anchor for type II membrane protein segment; the sequence is LGIILAIFFGISATVGLMVYA. At 30–160 the chain is on the periplasmic side; sequence LNQNMDLFYT…TTEQKEGNAQ (131 aa). Heme-binding residues include H128 and Y132.

This sequence belongs to the CcmE/CycJ family.

Its subcellular location is the cell inner membrane. Its function is as follows. Heme chaperone required for the biogenesis of c-type cytochromes. Transiently binds heme delivered by CcmC and transfers the heme to apo-cytochromes in a process facilitated by CcmF and CcmH. The protein is Cytochrome c-type biogenesis protein CcmE of Vibrio atlanticus (strain LGP32) (Vibrio splendidus (strain Mel32)).